A 93-amino-acid chain; its full sequence is Small ribosomal subunit protein uS19 (93 aa).

It belongs to the universal ribosomal protein uS19 family.

Functionally, protein S19 forms a complex with S13 that binds strongly to the 16S ribosomal RNA. The chain is Small ribosomal subunit protein uS19 from Pseudarthrobacter chlorophenolicus (strain ATCC 700700 / DSM 12829 / CIP 107037 / JCM 12360 / KCTC 9906 / NCIMB 13794 / A6) (Arthrobacter chlorophenolicus).